A 322-amino-acid polypeptide reads, in one-letter code: MARNKIALIGSGMIGGTLAHMIGLKDLGDVVLFDIAEGIPQGKGLDIAQSSPVDGFDSRLTGVNDYAGIEGADVCIVTAGVPRKPGMSRDDLLGINLKVMEQVGAGLKKYAPKAFVICITNPLDAMVWALQKFSGLPKTHVVGMAGVLDSARFRYFLAEEFKVSVEDVTAFVLGGHGDSMVPMIRYSTVSGIPLPDLVKMGWTSKEKLDQIVQRTRDGGAEIVGLLKTGSAYYAPAASAIAMAESYLKDKKRVLPCAAHLSGQYGVKGTYVGVPVVIGAGGVERIIEIDLNKSEQKMFESSVATVQGLTEACVKIAPQLASK.

NAD(+) contacts are provided by residues 10 to 15 (GSGMIG) and Asp-34. Positions 83 and 89 each coordinate substrate. NAD(+) contacts are provided by residues Asn-96 and 119-121 (ITN). Substrate is bound by residues Asn-121 and Arg-152. His-176 functions as the Proton acceptor in the catalytic mechanism.

The protein belongs to the LDH/MDH superfamily. MDH type 3 family.

The catalysed reaction is (S)-malate + NAD(+) = oxaloacetate + NADH + H(+). Functionally, catalyzes the reversible oxidation of malate to oxaloacetate. This chain is Malate dehydrogenase, found in Mesorhizobium japonicum (strain LMG 29417 / CECT 9101 / MAFF 303099) (Mesorhizobium loti (strain MAFF 303099)).